The primary structure comprises 456 residues: ACT domain-containing protein ACR5 (456 aa).

ACT domains lie at 39-115 (VIKV…FSPS), 130-207 (VVEL…SSGR), 271-347 (IVMI…VSEG), and 349-432 (KLEL…PSPQ).

In terms of tissue distribution, expressed in stems and siliques.

Its function is as follows. May bind amino acids. The protein is ACT domain-containing protein ACR5 of Arabidopsis thaliana (Mouse-ear cress).